The chain runs to 266 residues: MVTTLSYTERASHPSPLAKRLFSLMESKKTNLCASVDVRTTEELLKLVDTLGPYICLLKTHIDIIDDFSMESTVAPLLELSKEHNFLIFEDRKFADIGNTVKAQYAGGAFKIAQWADITNAHGVTGRGIVKGLKEAAQETTDEPRGLLMLAELSSKGSFAHGTYTEETVEIAKTDKDFCIGFIAQRDMGGREDGFDWIIMTPGVGLDDKGDSLGQQYRTVDEVVSGGCDIIIVGRGLFGKGRDPTVEGERYRKAGWDAYLKRYSAQ.

Substrate contacts are provided by residues D37, 59 to 61 (KTH), 91 to 100 (DRKFADIGNT), Y217, and R235. K93 serves as the catalytic Proton donor.

The protein belongs to the OMP decarboxylase family.

It catalyses the reaction orotidine 5'-phosphate + H(+) = UMP + CO2. Its pathway is pyrimidine metabolism; UMP biosynthesis via de novo pathway; UMP from orotate: step 2/2. The chain is Orotidine 5'-phosphate decarboxylase (URA3) from Cyberlindnera jadinii (Torula yeast).